The sequence spans 75 residues: UPF0235 protein Mflv_3569 (75 aa).

It belongs to the UPF0235 family.

In Mycolicibacterium gilvum (strain PYR-GCK) (Mycobacterium gilvum (strain PYR-GCK)), this protein is UPF0235 protein Mflv_3569.